Here is a 519-residue protein sequence, read N- to C-terminus: Zinc finger protein 692 (519 aa).

The disordered stretch occupies residues 123 to 314; sequence GPSLSPTPSE…PAWDEDTAQI (192 aa). The segment covering 145 to 155 has biased composition (polar residues); that stretch reads RSWCSEATSGQ. Serine 162 is modified (phosphoserine). Residues 164–173 are compositionally biased toward basic and acidic residues; sequence HDERTQEARL. Over residues 177–187 the composition is skewed to pro residues; the sequence is VGPPPETFPPP. The segment covering 188–206 has biased composition (acidic residues); it reads GEEEGEEEEDNDEDEEEML. Serine 231 carries the phosphoserine modification. Residues 247 to 266 are compositionally biased toward low complexity; that stretch reads AALSSPLAVPALSASSLSSR. Polar residues predominate over residues 277 to 303; it reads PQLSRTPQAAQQTEALASTGSQAQSAP. 5 C2H2-type zinc fingers span residues 328 to 353, 359 to 383, 389 to 411, 417 to 439, and 448 to 471; these read MPCD…KYQH, FSCP…MKLH, YICE…RRIH, LQCE…QRKH, and FPCE…SKSH. The interval 469–519 is disordered; that stretch reads KSHPALLLAPQESPSGPLEPCPSISAPGPLGSSEGSRPSASPQAPTLLPQQ. Serine 470 carries the post-translational modification Phosphoserine; by AMPK. The segment covering 501–519 has biased composition (polar residues); it reads SEGSRPSASPQAPTLLPQQ.

This sequence belongs to the krueppel C2H2-type zinc-finger protein family. In terms of processing, phosphorylation at Ser-470 results in loss of DNA-binding activity. In terms of tissue distribution, ubiquitous. Highly expressed in brain, thymus and spleen.

Its subcellular location is the nucleus. May act as an transcriptional repressor for PCK1 gene expression, in turn may participate in the hepatic gluconeogenesis regulation through the activated AMPK signaling pathway. In Homo sapiens (Human), this protein is Zinc finger protein 692 (ZNF692).